The sequence spans 520 residues: Beta-galactoside-specific lectin 4 (520 aa).

Residue N107 is glycosylated (N-linked (GlcNAc...) asparagine). E159 is a catalytic residue. C240 and C266 are oxidised to a cystine. Positions 241–265 (GERPSSSDVRYWPLVIRPVIADDVT) are cleaved as a propeptide — connecting peptide. The Ricin B-type lectin 1 domain maps to 269-396 (SEPTVRIVGR…YTLGQGWLAG (128 aa)). 284–286 (DVR) is a binding site for D-galactose. N-linked (GlcNAc...) asparagine glycosylation is present at N322. Cysteines 325 and 342 form a disulfide. Residues N357 and N397 are each glycosylated (N-linked (GlcNAc...) asparagine). In terms of domain architecture, Ricin B-type lectin 2 spans 400-520 (APREVTIYGF…KPNQMWLPVP (121 aa)). Cystine bridges form between C413–C426 and C451–C467. 494 to 496 (DVA) provides a ligand contact to D-galactose.

It belongs to the ribosome-inactivating protein family. Type 2 RIP subfamily. Disulfide-linked dimer of A and B chains.

It carries out the reaction Endohydrolysis of the N-glycosidic bond at one specific adenosine on the 28S rRNA.. The A chain is responsible for inhibiting protein synthesis through the catalytic inactivation of 60S ribosomal subunits by removing adenine from position 4,324 of 28S rRNA. The B chain binds to cell receptors and probably facilitates the entry into the cell of the A chain; B chains are also responsible for cell agglutination (lectin activity). Inhibits growth of the human tumor cell line Molt4. The sequence is that of Beta-galactoside-specific lectin 4 from Viscum album (European mistletoe).